The chain runs to 205 residues: Protein phosphatase inhibitor 2 family member C (205 aa).

2 disordered regions span residues 1–51 (MSAS…DESS) and 70–114 (EPGT…DHSC). Positions 12–17 (KGILKN) are required for binding PPP1CC. Residues 19 to 34 (SSSGSSVATSGQQSGG) are compositionally biased toward low complexity. Residues 43–55 (KSQKWDESSILAT) are required for binding PPP1CC. Positions 84–102 (DSVRDVEGEDSVRGVEGKE) are enriched in basic and acidic residues. Residues 147–150 (HYNE) form a required for binding PPP1CC catalytic center, displacing metal ions and inhibition of PPP1CC catalytic activity region. Residues 165-205 (LQSEDDENEERPQATNEEKTAAEESEEAPLSGGLQTQSCDP) form a disordered region. The segment covering 174–186 (ERPQATNEEKTAA) has biased composition (basic and acidic residues).

It belongs to the protein phosphatase inhibitor 2 family.

Functions as a protein phosphatase inhibitor. It inhibits activity of the catalytic subunit of PP1 and weakly inhibits the activity of myosin-associated phosphates. The chain is Protein phosphatase inhibitor 2 family member C (PPP1R2C) from Macaca fascicularis (Crab-eating macaque).